We begin with the raw amino-acid sequence, 388 residues long: Putative F-box protein At3g17490 (388 aa).

The F-box domain occupies 1–46; the sequence is MMMPHLSEDLVEEILSRVPAISLKRLRYTCKQWNALFNDQRFSKKH.

This is Putative F-box protein At3g17490 from Arabidopsis thaliana (Mouse-ear cress).